Here is a 688-residue protein sequence, read N- to C-terminus: Elongation factor G 2 (688 aa).

The region spanning 7 to 282 (DSIRNIGIIS…AVAAYLPSPR (276 aa)) is the tr-type G domain. GTP-binding positions include 16–23 (SHIDAGKT), 80–84 (DTPGH), and 134–137 (NKMD).

The protein belongs to the TRAFAC class translation factor GTPase superfamily. Classic translation factor GTPase family. EF-G/EF-2 subfamily.

The protein resides in the cytoplasm. Catalyzes the GTP-dependent ribosomal translocation step during translation elongation. During this step, the ribosome changes from the pre-translocational (PRE) to the post-translocational (POST) state as the newly formed A-site-bound peptidyl-tRNA and P-site-bound deacylated tRNA move to the P and E sites, respectively. Catalyzes the coordinated movement of the two tRNA molecules, the mRNA and conformational changes in the ribosome. The protein is Elongation factor G 2 of Geobacter metallireducens (strain ATCC 53774 / DSM 7210 / GS-15).